Reading from the N-terminus, the 312-residue chain is Apolipoprotein E (312 aa).

The N-terminal stretch at 1-18 is a signal peptide; it reads MKALWAVLLATLLTGCLA. 8 tandem repeats follow at residues 72 to 93, 94 to 115, 116 to 137, 138 to 159, 160 to 181, 182 to 203, 204 to 225, and 226 to 247. Residues 72–247 form an 8 X 22 AA approximate tandem repeats region; the sequence is VLMEDTMTEV…RLEEMREHME (176 aa). A Methionine sulfoxide modification is found at M135. An LDL and other lipoprotein receptors binding region spans residues 150–160; that stretch reads HLRKMRKRLMR. Residues 150–160 form an LDL receptor binding region; the sequence is HLRKMRKRLMR. 154–157 serves as a coordination point for heparin; the sequence is MRKR. The lipid-binding and lipoprotein association stretch occupies residues 202-282; that stretch reads TANLGAGAAQ…SWFEPLVEDM (81 aa). 221–228 lines the heparin pocket; that stretch reads SERLRGRL. The interval 258–312 is homooligomerization; sequence QQIRLQAEIFQARLKSWFEPLVEDMHRQLANLVEKIQSSVATNSVLSTSVPQENQ. Residues 270–282 are specificity for association with VLDL; the sequence is RLKSWFEPLVEDM.

It belongs to the apolipoprotein A1/A4/E family. As to quaternary structure, homotetramer. May interact with ABCA1; functionally associated with ABCA1 in the biogenesis of HDLs. May interact with APP/A4 amyloid-beta peptide; the interaction is extremely stable in vitro but its physiological significance is unclear. May interact with MAPT. May interact with MAP2. In the cerebrospinal fluid, interacts with secreted SORL1. Interacts with PMEL; this allows the loading of PMEL luminal fragment on ILVs to induce fibril nucleation. In terms of processing, APOE exists as multiple glycosylated and sialylated glycoforms within cells and in plasma. The extent of glycosylation and sialylation are tissue and context specific. Post-translationally, glycated in plasma VLDL. Phosphorylated by FAM20C in the extracellular medium.

The protein localises to the secreted. Its subcellular location is the extracellular space. It is found in the extracellular matrix. It localises to the extracellular vesicle. The protein resides in the endosome. The protein localises to the multivesicular body. Functionally, APOE is an apolipoprotein, a protein associating with lipid particles, that mainly functions in lipoprotein-mediated lipid transport between organs via the plasma and interstitial fluids. APOE is a core component of plasma lipoproteins and is involved in their production, conversion and clearance. Apolipoproteins are amphipathic molecules that interact both with lipids of the lipoprotein particle core and the aqueous environment of the plasma. As such, APOE associates with chylomicrons, chylomicron remnants, very low density lipoproteins (VLDL) and intermediate density lipoproteins (IDL) but shows a preferential binding to high-density lipoproteins (HDL). It also binds a wide range of cellular receptors including the LDL receptor/LDLR, the LDL receptor-related proteins LRP1, LRP2 and LRP8 and the very low-density lipoprotein receptor/VLDLR that mediate the cellular uptake of the APOE-containing lipoprotein particles. Finally, APOE also has a heparin-binding activity and binds heparan-sulfate proteoglycans on the surface of cells, a property that supports the capture and the receptor-mediated uptake of APOE-containing lipoproteins by cells. A main function of APOE is to mediate lipoprotein clearance through the uptake of chylomicrons, VLDLs, and HDLs by hepatocytes. APOE is also involved in the biosynthesis by the liver of VLDLs as well as their uptake by peripheral tissues ensuring the delivery of triglycerides and energy storage in muscle, heart and adipose tissues. By participating in the lipoprotein-mediated distribution of lipids among tissues, APOE plays a critical role in plasma and tissues lipid homeostasis. APOE is also involved in two steps of reverse cholesterol transport, the HDLs-mediated transport of cholesterol from peripheral tissues to the liver, and thereby plays an important role in cholesterol homeostasis. First, it is functionally associated with ABCA1 in the biogenesis of HDLs in tissues. Second, it is enriched in circulating HDLs and mediates their uptake by hepatocytes. APOE also plays an important role in lipid transport in the central nervous system, regulating neuron survival and sprouting. This chain is Apolipoprotein E (Apoe), found in Arvicanthis niloticus (African grass rat).